The chain runs to 518 residues: Glutamate--cysteine ligase (518 aa).

The protein belongs to the glutamate--cysteine ligase type 1 family. Type 1 subfamily.

It carries out the reaction L-cysteine + L-glutamate + ATP = gamma-L-glutamyl-L-cysteine + ADP + phosphate + H(+). The protein operates within sulfur metabolism; glutathione biosynthesis; glutathione from L-cysteine and L-glutamate: step 1/2. This Shigella boydii serotype 18 (strain CDC 3083-94 / BS512) protein is Glutamate--cysteine ligase.